Consider the following 540-residue polypeptide: 2-isopropylmalate synthase (540 aa).

The 264-residue stretch at 8–271 (VLIFDTTLRD…NPFFGREEDS (264 aa)) folds into the Pyruvate carboxyltransferase domain. Mn(2+) contacts are provided by Asp-17, His-208, His-210, and Asn-244. Positions 408-540 (QLKLVQVSCG…PVVLESRPTL (133 aa)) are regulatory domain.

This sequence belongs to the alpha-IPM synthase/homocitrate synthase family. LeuA type 1 subfamily. As to quaternary structure, homodimer. It depends on Mn(2+) as a cofactor.

It is found in the cytoplasm. The enzyme catalyses 3-methyl-2-oxobutanoate + acetyl-CoA + H2O = (2S)-2-isopropylmalate + CoA + H(+). It functions in the pathway amino-acid biosynthesis; L-leucine biosynthesis; L-leucine from 3-methyl-2-oxobutanoate: step 1/4. Catalyzes the condensation of the acetyl group of acetyl-CoA with 3-methyl-2-oxobutanoate (2-ketoisovalerate) to form 3-carboxy-3-hydroxy-4-methylpentanoate (2-isopropylmalate). This chain is 2-isopropylmalate synthase, found in Synechococcus sp. (strain CC9605).